The chain runs to 209 residues: Mei4-dependent protein 1 (209 aa).

Positions 1 to 22 (MLHATQLCYLLLFCFLPISISS) are cleaved as a signal peptide.

Its subcellular location is the secreted. The protein is Mei4-dependent protein 1 (mde1) of Schizosaccharomyces pombe (strain 972 / ATCC 24843) (Fission yeast).